Reading from the N-terminus, the 290-residue chain is Programmed cell death 1 ligand 1 (290 aa).

Residues 1-18 form the signal peptide; it reads MRIFAGIIFTACCHLLRA. The Ig-like V-type domain maps to 19–127; the sequence is FTITAPKDLY…YGGADYKRIT (109 aa). At 19-239 the chain is on the extracellular side; it reads FTITAPKDLY…ATHPPQNRTH (221 aa). Asn-35 is a glycosylation site (N-linked (GlcNAc...) asparagine). Cystine bridges form between Cys-40-Cys-114 and Cys-154-Cys-208. The Ig-like C2-type domain maps to 133 to 224; the sequence is PYRKINQRIS…PGQNHTAELI (92 aa). Asn-191, Asn-199, Asn-218, and Asn-236 each carry an N-linked (GlcNAc...) asparagine glycan. The chain crosses the membrane as a helical span at residues 240–260; sequence WVLLGSILLFLIVVSTVLLFL. Residues 261–290 lie on the Cytoplasmic side of the membrane; it reads RKQVRMLDVEKCGVEDTSSKNRNDTQFEET.

The protein belongs to the immunoglobulin superfamily. BTN/MOG family. As to quaternary structure, interacts with PDCD1. Interacts with CMTM4 and CMTM6. Interacts with CD80. In terms of processing, ubiquitinated; STUB1 likely mediates polyubiquitination of PD-L1/CD274 triggering its degradation. Ubiquitinated by MARCHF8; leading to degradation. Deubiquitinated by USP22; leading to stabilization. In terms of tissue distribution, highly expressed in the heart, thymus, skeletal muscle, and lung. Weakly expressed in the kidney, spleen, thyroid, and liver. Expressed on activated dendritic cells, B-cells and macrophages. Expressed in numerous tumor cells lines of lymphoid origin.

The protein resides in the cell membrane. Its subcellular location is the early endosome membrane. It is found in the recycling endosome membrane. Its function is as follows. Plays a critical role in induction and maintenance of immune tolerance to self. As a ligand for the inhibitory receptor PDCD1/PD-1, modulates the activation threshold of T-cells and limits T-cell effector response. Through a yet unknown activating receptor, may costimulate T-cell subsets that predominantly produce interleukin-10 (IL10). Functionally, the PDCD1-mediated inhibitory pathway is exploited by tumors to attenuate anti-tumor immunity and escape destruction by the immune system, thereby facilitating tumor survival. The interaction with PDCD1/PD-1 inhibits cytotoxic T lymphocytes (CTLs) effector function. The blockage of the PDCD1-mediated pathway results in the reversal of the exhausted T-cell phenotype and the normalization of the anti-tumor response, providing a rationale for cancer immunotherapy. The polypeptide is Programmed cell death 1 ligand 1 (Cd274) (Mus musculus (Mouse)).